We begin with the raw amino-acid sequence, 117 residues long: MTILLSSNFLNHKTLLCSIDSAVTLFMETMMPSDVLCLLQDSLISFCKINLATTRGIFSIRWARTTSHSMNQYLSLNVAILIQENHHRDTRNVNAQYLSTSQRSRLYTCISINIYFK.

This is an uncharacterized protein from Microplitis demolitor bracovirus (isolate Webb) (MdBV).